We begin with the raw amino-acid sequence, 161 residues long: MORN repeat-containing protein 5 (161 aa).

MORN repeat units lie at residues 8–30 (YIGE…TETI), 31–53 (YVGE…SGSQ), and 54–75 (YDAI…DGLH).

As to expression, expressed in sperm (at protein level).

Its subcellular location is the cell projection. It is found in the cilium. The protein localises to the flagellum. The chain is MORN repeat-containing protein 5 (MORN5) from Homo sapiens (Human).